The chain runs to 80 residues: Acyl carrier protein (80 aa).

Positions 2–77 (KNIEERIKKI…KSIDFIQKKN (76 aa)) constitute a Carrier domain. Position 37 is an O-(pantetheine 4'-phosphoryl)serine (Ser37).

This sequence belongs to the acyl carrier protein (ACP) family. Post-translationally, 4'-phosphopantetheine is transferred from CoA to a specific serine of apo-ACP by AcpS. This modification is essential for activity because fatty acids are bound in thioester linkage to the sulfhydryl of the prosthetic group.

It is found in the cytoplasm. It participates in lipid metabolism; fatty acid biosynthesis. Functionally, carrier of the growing fatty acid chain in fatty acid biosynthesis. The sequence is that of Acyl carrier protein from Buchnera aphidicola subsp. Acyrthosiphon pisum (strain APS) (Acyrthosiphon pisum symbiotic bacterium).